The primary structure comprises 241 residues: Folate receptor alpha (241 aa).

Residues 1–19 form the signal peptide; sequence MAWQMTQLLLLALVAAAWG. 8 disulfides stabilise this stretch: cysteine 36-cysteine 64, cysteine 56-cysteine 104, cysteine 65-cysteine 108, cysteine 88-cysteine 174, cysteine 95-cysteine 145, cysteine 134-cysteine 208, cysteine 138-cysteine 188, and cysteine 151-cysteine 168. Asparagine 68 is a glycosylation site (N-linked (GlcNAc...) asparagine). Folate-binding positions include aspartate 102, tyrosine 106, 123 to 127, 156 to 161, and serine 195; these read WRKER and HKGWNW. An N-linked (GlcNAc...) asparagine glycan is attached at asparagine 160. Residue serine 234 is the site of GPI-anchor amidated serine attachment. A propeptide spans 235–241 (removed in mature form); it reads GSTPQGI.

Belongs to the folate receptor family. Post-translationally, the secreted form is derived from the membrane-bound form either by cleavage of the GPI anchor, or/and by proteolysis catalyzed by a metalloprotease. Detected in milk (at protein level).

The protein resides in the cell membrane. The protein localises to the apical cell membrane. It localises to the basolateral cell membrane. It is found in the secreted. Its subcellular location is the cytoplasmic vesicle. The protein resides in the clathrin-coated vesicle. The protein localises to the endosome. Its function is as follows. Binds to folate and reduced folic acid derivatives and mediates delivery of 5-methyltetrahydrofolate and folate analogs into the interior of cells. Has high affinity for folate and folic acid analogs at neutral pH. Exposure to slightly acidic pH after receptor endocytosis triggers a conformation change that strongly reduces its affinity for folates and mediates their release. Required for normal embryonic development and normal cell proliferation. This is Folate receptor alpha (FOLR1) from Bos taurus (Bovine).